A 483-amino-acid polypeptide reads, in one-letter code: Myocilin (483 aa).

Residues 1 to 18 (MPTAQLLLLACLLWGLEA) form the signal peptide. N-linked (GlcNAc...) asparagine glycosylation is present at N43. A coiled-coil region spans residues 51–162 (GQAMSAIQDL…SQEVARLRRG (112 aa)). The tract at residues 153 to 179 (SQEVARLRRGQCPQAHSSSQDVPAGSR) is disordered. Positions 223–482 (GCGELVWVGE…MVTYDIRLSK (260 aa)) constitute an Olfactomedin-like domain. A disulfide bond links C224 and C412. D359, N407, A408, I456, and D457 together coordinate Ca(2+). The Microbody targeting signal motif lies at 481 to 483 (SKM).

In terms of assembly, homodimer (via N-terminus). Can also form higher oligomers. Interacts with OLFM3, FN1, NRCAM, GLDN and NFASC. Interacts (via N-terminus) with MYL2. Interacts with SFRP1, FRZB, FZD7, FZD10, FZD1 and WIF1; regulates Wnt signaling. Interacts with SNTA1; regulates muscle hypertrophy. Interacts with ERBB2 and ERBB3; activates ERBB2-ERBB3 signaling pathway. Interacts with SNCG; affects its secretion and its aggregation. N-glycosylated. Post-translationally, palmitoylated. In terms of processing, undergoes a calcium-dependent proteolytic cleavage at Arg-205 by CAPN2 in the endoplasmic reticulum. The result is the production of two fragments, one of 35 kDa containing the C-terminal olfactomedin-like domain, and another of 20 kDa containing the N-terminal leucine zipper-like domain. As to expression, expressed in optic nerve head, ciliary body and retina.

It localises to the secreted. The protein resides in the golgi apparatus. Its subcellular location is the cytoplasmic vesicle. The protein localises to the extracellular space. It is found in the extracellular matrix. It localises to the extracellular exosome. The protein resides in the mitochondrion. Its subcellular location is the mitochondrion intermembrane space. The protein localises to the mitochondrion inner membrane. It is found in the mitochondrion outer membrane. It localises to the rough endoplasmic reticulum. The protein resides in the cell projection. Its subcellular location is the cilium. The protein localises to the endoplasmic reticulum. Secreted glycoprotein regulating the activation of different signaling pathways in adjacent cells to control different processes including cell adhesion, cell-matrix adhesion, cytoskeleton organization and cell migration. Promotes substrate adhesion, spreading and formation of focal contacts. Negatively regulates cell-matrix adhesion and stress fiber assembly through Rho protein signal transduction. Modulates the organization of actin cytoskeleton by stimulating the formation of stress fibers through interactions with components of Wnt signaling pathways. Promotes cell migration through activation of PTK2 and the downstream phosphatidylinositol 3-kinase signaling. Plays a role in bone formation and promotes osteoblast differentiation in a dose-dependent manner through mitogen-activated protein kinase signaling. Mediates myelination in the peripheral nervous system through ERBB2/ERBB3 signaling. Plays a role as a regulator of muscle hypertrophy through the components of dystrophin-associated protein complex. Involved in positive regulation of mitochondrial depolarization. Plays a role in neurite outgrowth. May participate in the obstruction of fluid outflow in the trabecular meshwork. This is Myocilin (MYOC) from Canis lupus familiaris (Dog).